The chain runs to 260 residues: Putative hydro-lyase Dshi_0610 (260 aa).

The protein belongs to the D-glutamate cyclase family.

The sequence is that of Putative hydro-lyase Dshi_0610 from Dinoroseobacter shibae (strain DSM 16493 / NCIMB 14021 / DFL 12).